The following is a 549-amino-acid chain: Neutral amino acid transporter 9 (549 aa).

Residues Met-1–Arg-27 are disordered. Topologically, residues Met-1 to Ser-107 are cytoplasmic. A helical membrane pass occupies residues Ile-108 to Trp-128. Residues Thr-117–Ser-122 form an important for arginine binding and amino acid transport region. Residue Ser-122 participates in arginine binding. The Lumenal portion of the chain corresponds to Gly-129–Gly-134. Residues Phe-135–Arg-155 form a helical membrane-spanning segment. Residues Val-156–Lys-186 lie on the Cytoplasmic side of the membrane. A helical membrane pass occupies residues Trp-187–Phe-213. At Asn-214–His-271 the chain is on the lumenal side. N-linked (GlcNAc...) asparagine glycans are attached at residues Asn-227, Asn-235, Asn-252, and Asn-263. Cys-242 and Cys-412 form a disulfide bridge. A helical membrane pass occupies residues Trp-272–Leu-288. At Pro-289–Ser-297 the chain is on the cytoplasmic side. A helical membrane pass occupies residues Phe-298–Ile-322. The Lumenal portion of the chain corresponds to Gln-323–Arg-344. A helical transmembrane segment spans residues Thr-345–Ile-365. The Cytoplasmic portion of the chain corresponds to Thr-366–Ser-382. A helical transmembrane segment spans residues Leu-383–Phe-403. The Lumenal segment spans residues Pro-404–Asp-425. Residues Ile-426–Leu-446 form a helical membrane-spanning segment. Residues Arg-432 to Val-442 carry the CARC motif motif. Positions Leu-445 to Arg-451 match the CRAC motif motif. Residues Gly-447–Leu-467 are Cytoplasmic-facing. The chain crosses the membrane as a helical span at residues His-468–Pro-488. At Asn-489–Arg-495 the chain is on the lumenal side. Residues Tyr-496 to Val-516 form a helical membrane-spanning segment. Topologically, residues Ser-517–Ser-528 are cytoplasmic. A helical transmembrane segment spans residues Thr-529 to Met-549.

It belongs to the amino acid/polyamine transporter 2 family. SLC38A9 subfamily. In terms of assembly, associated component of the Ragulator complex. Associated component of the Rag GTPases heterodimers (RRAGA and RRAGC). Post-translationally, glycosylated.

Its subcellular location is the lysosome membrane. It is found in the late endosome membrane. It catalyses the reaction L-leucine(in) = L-leucine(out). It carries out the reaction L-tyrosine(in) = L-tyrosine(out). The enzyme catalyses L-glutamine(out) = L-glutamine(in). The catalysed reaction is L-asparagine(out) = L-asparagine(in). Its activity is regulated as follows. Amino acid transport activity is increased by sodium. Transport of L-glutamine, leucine and tyrosine is increased by arginine binding. Its function is as follows. Lysosomal amino acid transporter involved in the activation of mTORC1 in response to amino acid levels. Probably acts as an amino acid sensor of the Rag GTPases and Ragulator complexes, 2 complexes involved in amino acid sensing and activation of mTORC1, a signaling complex promoting cell growth in response to growth factors, energy levels, and amino acids. Following activation by amino acids, the Ragulator and Rag GTPases function as a scaffold recruiting mTORC1 to lysosomes where it is in turn activated. SLC38A9 mediates transport of amino acids with low capacity and specificity with a slight preference for polar amino acids. Acts as an arginine sensor. Following activation by arginine binding, mediates transport of L-glutamine, leucine and tyrosine with high efficiency, and is required for the efficient utilization of these amino acids after lysosomal protein degradation. However, the transport mechanism is not well defined and the role of sodium is not clear. Guanine exchange factor (GEF) that, upon arginine binding, stimulates GDP release from RRAGA and therefore activates the Rag GTPase heterodimer and the mTORC1 pathway in response to nutrient sufficiency. This is Neutral amino acid transporter 9 from Danio rerio (Zebrafish).